We begin with the raw amino-acid sequence, 294 residues long: MTAKIIDGKVIAADLRARVADEVARVKREHNLVPGLAVVLVGNDPASEVYVRSKGTQTQAAGMASFEHKLPADVSQADLLAVVAKLNRDPAVHGILVQLPLPKGLNTEAVINAIDPAKDVDGLHPNNAGRLAGGFEALSPCTPLGSIILTKSVHPSLEGLNAIVIGRSNLVGRPLVQLLLNENATVTIAHSRSRDLPGLVKRADLVYAAVGKPEMVRGDWLKPGATVIDIGISRIPKEDGKTRLVGDVAYQEALGVAGAITPVPGGVGQMTVACLLVNTLRAACAIAGLPKPAV.

NADP(+) contacts are provided by residues 166–168, serine 191, and isoleucine 232; that span reads GRS.

Belongs to the tetrahydrofolate dehydrogenase/cyclohydrolase family. As to quaternary structure, homodimer.

It catalyses the reaction (6R)-5,10-methylene-5,6,7,8-tetrahydrofolate + NADP(+) = (6R)-5,10-methenyltetrahydrofolate + NADPH. It carries out the reaction (6R)-5,10-methenyltetrahydrofolate + H2O = (6R)-10-formyltetrahydrofolate + H(+). It participates in one-carbon metabolism; tetrahydrofolate interconversion. Catalyzes the oxidation of 5,10-methylenetetrahydrofolate to 5,10-methenyltetrahydrofolate and then the hydrolysis of 5,10-methenyltetrahydrofolate to 10-formyltetrahydrofolate. This is Bifunctional protein FolD from Bradyrhizobium diazoefficiens (strain JCM 10833 / BCRC 13528 / IAM 13628 / NBRC 14792 / USDA 110).